The primary structure comprises 198 residues: Large ribosomal subunit protein uL23c (198 aa).

The N-terminal 76 residues, 1–76 (MATTAPNLHS…SFGRDLMVAQ (76 aa)), are a transit peptide targeting the chloroplast.

The protein belongs to the universal ribosomal protein uL23 family. In terms of assembly, component of the chloroplast large ribosomal subunit (LSU). Mature 70S chloroplast ribosomes of higher plants consist of a small (30S) and a large (50S) subunit. The 30S small subunit contains 1 molecule of ribosomal RNA (16S rRNA) and 24 different proteins. The 50S large subunit contains 3 rRNA molecules (23S, 5S and 4.5S rRNA) and 33 different proteins.

It localises to the plastid. It is found in the chloroplast. Component of the chloroplast ribosome (chloro-ribosome), a dedicated translation machinery responsible for the synthesis of chloroplast genome-encoded proteins, including proteins of the transcription and translation machinery and components of the photosynthetic apparatus. The sequence is that of Large ribosomal subunit protein uL23c (RPL23) from Spinacia oleracea (Spinach).